The primary structure comprises 118 residues: Pterin-4-alpha-carbinolamine dehydratase (118 aa).

Belongs to the pterin-4-alpha-carbinolamine dehydratase family.

It carries out the reaction (4aS,6R)-4a-hydroxy-L-erythro-5,6,7,8-tetrahydrobiopterin = (6R)-L-erythro-6,7-dihydrobiopterin + H2O. Functionally, involved in tetrahydrobiopterin biosynthesis. Seems to both prevent the formation of 7-pterins and accelerate the formation of quinonoid-BH2. May also have a positive regulatory role in the expression of phhA. The polypeptide is Pterin-4-alpha-carbinolamine dehydratase (phhB) (Pseudomonas syringae pv. tomato (strain ATCC BAA-871 / DC3000)).